The following is a 466-amino-acid chain: Putative multidrug resistance protein MdtD (466 aa).

Transmembrane regions (helical) follow at residues Leu11–Ala31, Ser48–Ala68, Ile71–Cys91, Val105–Ile125, Phe137–Val157, Trp164–Met184, Phe194–Asp214, Ser218–Leu238, Phe262–Met282, Phe286–Val306, Val328–Ala347, Trp351–Phe370, Leu403–Gly423, and Met429–Phe449.

It belongs to the major facilitator superfamily. TCR/Tet family.

Its subcellular location is the cell inner membrane. This chain is Putative multidrug resistance protein MdtD, found in Pectobacterium carotovorum subsp. carotovorum (strain PC1).